The following is a 222-amino-acid chain: UPF0758 protein YicR (222 aa).

The 123-residue stretch at 100–222 folds into the MPN domain; that stretch reads PLLSPEMTRE…YVSFAERGWI (123 aa). 3 residues coordinate Zn(2+): histidine 171, histidine 173, and aspartate 184. A JAMM motif motif is present at residues 171 to 184; sequence HNHPSGCAEPSKAD.

The protein belongs to the UPF0758 family. YicR subfamily.

The polypeptide is UPF0758 protein YicR (Escherichia coli (strain 55989 / EAEC)).